The sequence spans 423 residues: Zinc finger and BTB domain-containing protein 6 (423 aa).

In terms of domain architecture, BTB spans 33-97 (CDVSIYINDT…CYTGALEVKR (65 aa)). Ser-201 carries the post-translational modification Phosphoserine. C2H2-type zinc fingers lie at residues 300 to 322 (HQCPRCPRGFLHVENYLRHLKMH), 325 to 347 (FLCLQCGKTFTQKKNLNRHIRGH), 353 to 375 (FQCTVCLKTFTAKSTLQDHLNIH), and 381 to 404 (YKCHCCDMDFKHKSALKKHLTSVH).

It is found in the nucleus. Its function is as follows. May be involved in transcriptional regulation. The protein is Zinc finger and BTB domain-containing protein 6 (Zbtb6) of Mus musculus (Mouse).